A 632-amino-acid polypeptide reads, in one-letter code: MSVYHAAYIDYALRVTENMTDVMTGSETVTLKSYQHFVSRVFLGLDKMHSLLLFHETGVGKTITTVFILKHLKDVYTNWIIILLVKKALVEDPWTYAITKYAPEILKDCIFITYDDKNFHNKFFTNIKTISSRTRLCIIIDECHNFISKSIIKEDGKQRPTKSVYNYLSKNVALHHHKLICLSATPIVNSVKEFVMLVNLLRPKILSNVSLFENKRLVNESELINKLGAICSYIVTNEFSIFDDVAGSSAFARKTVYFQYVNMTQKQEQVYQKAKLAELKAGISSFRIYRRMAATFTFDAFLDKTDKTPEEVANEQITLYKDFETFIKTKKFSEHALSQFKRGQSLGGTSSADDISFLNELRERSCKFTDVCLRILASPGKCLVFEPFVNQSGINILLLYFSAFNISYIEFSSRTKNTRVQSVAEFNKRENTDGDLIKTCVFSLSGGEGISFFSINDIFILDMTWNEASLRQIIGRAIRLNSHVLTPEHRRYVNVHFIVARLSNGDATVDEDLLDIIRTKSKEFTQLFKVFKHTSIEWIYEHQTDFSPVDNESGWSALISRSIDENPTTKRVPHVVKGQNIWYSHSNRLIAVYKGFKTDDGRLFDSDGNFIQTIQDNPVIKIHNDKLVYVLD.

The Helicase ATP-binding domain maps to 42-204 (FLGLDKMHSL…VMLVNLLRPK (163 aa)). ATP is bound at residue 55–62 (HETGVGKT). Residues 141-144 (DECH) carry the DEXH box motif. The Helicase C-terminal domain maps to 367-532 (KFTDVCLRIL…EFTQLFKVFK (166 aa)). The binding to the cap-specific mRNA (nucleoside-2'-O-)-methyltransferase stretch occupies residues 457 to 524 (DIFILDMTWN…DIIRTKSKEF (68 aa)).

It belongs to the helicase family. NPH I subfamily. In terms of assembly, monomer. Interacts (via C-terminus) with RAP94 (via N-terminus). Interacts with the cap-specific mRNA (nucleoside-2'-O-)-methyltransferase.

It localises to the virion. The catalysed reaction is a ribonucleoside 5'-triphosphate + H2O = a ribonucleoside 5'-diphosphate + phosphate + H(+). In terms of biological role, DNA-dependent ATPase required for providing the needed energy to achieve the termination of early transcripts. Acts in concert with the RAP94 subunit of the virion RNA polymerase and the capping enzyme/VTF to catalyze release of UUUUUNU-containing nascent RNA from the elongation complex. NPH-I must bind ssDNA in order to exhibit ATPase activity. The protein is Nucleoside triphosphatase I (NPH1) of Myxoma virus (strain Lausanne) (MYXV).